Consider the following 315-residue polypeptide: DNA-directed RNA polymerase subunit alpha (315 aa).

Residues 1–228 (MLEIEKPKIE…EHLRLFVGLT (228 aa)) form an alpha N-terminal domain (alpha-NTD) region. The segment at 245-315 (KNKLLEMPIE…LGLDLRHDEE (71 aa)) is alpha C-terminal domain (alpha-CTD).

Belongs to the RNA polymerase alpha chain family. In terms of assembly, homodimer. The RNAP catalytic core consists of 2 alpha, 1 beta, 1 beta' and 1 omega subunit. When a sigma factor is associated with the core the holoenzyme is formed, which can initiate transcription.

It carries out the reaction RNA(n) + a ribonucleoside 5'-triphosphate = RNA(n+1) + diphosphate. DNA-dependent RNA polymerase catalyzes the transcription of DNA into RNA using the four ribonucleoside triphosphates as substrates. This is DNA-directed RNA polymerase subunit alpha from Desulforudis audaxviator (strain MP104C).